The following is a 337-amino-acid chain: Glyceraldehyde-3-phosphate dehydrogenase (337 aa).

NAD(+) contacts are provided by residues 11–12 and glycine 111; that span reads TI. 140–142 lines the D-glyceraldehyde 3-phosphate pocket; it reads SCN. Cysteine 141 acts as the Nucleophile in catalysis. Arginine 169 contacts NAD(+). Residues 177 to 196 are disordered; that stretch reads KKGPINSIVPTTEVPSHHGP. 194 to 195 is a binding site for D-glyceraldehyde 3-phosphate; that stretch reads HG. An NAD(+)-binding site is contributed by glutamine 301.

Belongs to the glyceraldehyde-3-phosphate dehydrogenase family. Homotetramer.

The protein localises to the cytoplasm. It carries out the reaction D-glyceraldehyde 3-phosphate + phosphate + NADP(+) = (2R)-3-phospho-glyceroyl phosphate + NADPH + H(+). The catalysed reaction is D-glyceraldehyde 3-phosphate + phosphate + NAD(+) = (2R)-3-phospho-glyceroyl phosphate + NADH + H(+). The protein operates within carbohydrate degradation; glycolysis; pyruvate from D-glyceraldehyde 3-phosphate: step 1/5. This Methanosphaera stadtmanae (strain ATCC 43021 / DSM 3091 / JCM 11832 / MCB-3) protein is Glyceraldehyde-3-phosphate dehydrogenase.